The primary structure comprises 264 residues: Thymidylate synthase (264 aa).

DUMP contacts are provided by residues Arg-21 and 126–127; that span reads RR. Cys-146 functions as the Nucleophile in the catalytic mechanism. Residues 166 to 169, Asn-177, and 207 to 209 contribute to the dUMP site; these read RSAD and HLY. Asp-169 lines the (6R)-5,10-methylene-5,6,7,8-tetrahydrofolate pocket. A (6R)-5,10-methylene-5,6,7,8-tetrahydrofolate-binding site is contributed by Ala-263.

It belongs to the thymidylate synthase family. Bacterial-type ThyA subfamily. As to quaternary structure, homodimer.

It localises to the cytoplasm. The catalysed reaction is dUMP + (6R)-5,10-methylene-5,6,7,8-tetrahydrofolate = 7,8-dihydrofolate + dTMP. The protein operates within pyrimidine metabolism; dTTP biosynthesis. Functionally, catalyzes the reductive methylation of 2'-deoxyuridine-5'-monophosphate (dUMP) to 2'-deoxythymidine-5'-monophosphate (dTMP) while utilizing 5,10-methylenetetrahydrofolate (mTHF) as the methyl donor and reductant in the reaction, yielding dihydrofolate (DHF) as a by-product. This enzymatic reaction provides an intracellular de novo source of dTMP, an essential precursor for DNA biosynthesis. This Nitrobacter hamburgensis (strain DSM 10229 / NCIMB 13809 / X14) protein is Thymidylate synthase.